Consider the following 128-residue polypeptide: NADH dehydrogenase [ubiquinone] 1 beta subcomplex subunit 6 (128 aa).

Threonine 2 is subject to N-acetylthreonine. An N6-acetyllysine modification is found at lysine 24. The helical transmembrane segment at serine 68–methionine 86 threads the bilayer.

It belongs to the complex I NDUFB6 subunit family. Complex I is composed of 45 different subunits.

It is found in the mitochondrion inner membrane. Its function is as follows. Accessory subunit of the mitochondrial membrane respiratory chain NADH dehydrogenase (Complex I), that is believed not to be involved in catalysis. Complex I functions in the transfer of electrons from NADH to the respiratory chain. The immediate electron acceptor for the enzyme is believed to be ubiquinone. The protein is NADH dehydrogenase [ubiquinone] 1 beta subcomplex subunit 6 (NDUFB6) of Pan troglodytes (Chimpanzee).